The sequence spans 591 residues: Aspartate--tRNA ligase (591 aa).

L-aspartate is bound at residue Glu-176. Residues 200–203 form an aspartate region; sequence QILK. Arg-222 lines the L-aspartate pocket. Residues 222–224 and Gln-231 each bind ATP; that span reads RDE. His-450 contributes to the L-aspartate binding site. Glu-484 contributes to the ATP binding site. An L-aspartate-binding site is contributed by Arg-491. 536-539 is an ATP binding site; sequence GLDR.

Belongs to the class-II aminoacyl-tRNA synthetase family. Type 1 subfamily. Homodimer.

Its subcellular location is the cytoplasm. It catalyses the reaction tRNA(Asp) + L-aspartate + ATP = L-aspartyl-tRNA(Asp) + AMP + diphosphate. In terms of biological role, catalyzes the attachment of L-aspartate to tRNA(Asp) in a two-step reaction: L-aspartate is first activated by ATP to form Asp-AMP and then transferred to the acceptor end of tRNA(Asp). The protein is Aspartate--tRNA ligase of Listeria monocytogenes serotype 4b (strain F2365).